A 520-amino-acid chain; its full sequence is Macrophage receptor MARCO (520 aa).

Residues 1-43 lie on the Cytoplasmic side of the membrane; sequence MRNKKILKEDELLSETQQAAFHQIAMEPFEINVPKPKRRNGVN. Residues 44–64 traverse the membrane as a helical; Signal-anchor for type II membrane protein segment; that stretch reads FSLAVVVIYLILLTAGAGLLV. At 65-520 the chain is on the extracellular side; the sequence is VQVLNLQARL…EEDAGVECSV (456 aa). N-linked (GlcNAc...) asparagine glycosylation is found at N83 and N136. The disordered stretch occupies residues 142 to 423; it reads GMFRIKGEQG…KGERGENSVS (282 aa). Residues 147–419 enclose the Collagen-like domain; sequence KGEQGAPGLQ…VKGEKGERGE (273 aa). Low complexity-rich tracts occupy residues 203-227, 290-345, and 380-398; these read EAGL…PQGE, LAGF…PGAT, and SPGL…QKGD. Positions 410–419 are enriched in basic and acidic residues; sequence VKGEKGERGE. In terms of domain architecture, SRCR spans 424-519; that stretch reads VRIVGSSNRG…HEEDAGVECS (96 aa). Cystine bridges form between C447-C508, C460-C518, and C488-C498.

As to quaternary structure, homotrimer; disulfide-linked. Trimers may assemble in larger oligomers thus resulting in the creation of a large surface capable of interacting with very large ligands. Post-translationally, N-glycosylated. As to expression, expressed in alveolar macrophages (at protein level). Detected in macrophages from various tissues including thymus, kidney, Kupffer cells of liver, and spleen.

Its subcellular location is the cell membrane. Its function is as follows. Pattern recognition receptor (PRR) which binds Gram-positive and Gram-negative bacteria. Also plays a role in binding of unopsonized particles by alveolar macrophages. Binds to the secretoglobin SCGB3A2. This chain is Macrophage receptor MARCO (MARCO), found in Homo sapiens (Human).